The chain runs to 176 residues: Translation initiation factor IF-3 (176 aa).

The protein belongs to the IF-3 family. Monomer.

It localises to the cytoplasm. Its function is as follows. IF-3 binds to the 30S ribosomal subunit and shifts the equilibrium between 70S ribosomes and their 50S and 30S subunits in favor of the free subunits, thus enhancing the availability of 30S subunits on which protein synthesis initiation begins. The polypeptide is Translation initiation factor IF-3 (Nitratidesulfovibrio vulgaris (strain DSM 19637 / Miyazaki F) (Desulfovibrio vulgaris)).